A 448-amino-acid polypeptide reads, in one-letter code: Chromogranin-A (448 aa).

An N-terminal signal peptide occupies residues methionine 1–alanine 18. A disulfide bridge links cysteine 35 with cysteine 56. Residues leucine 116–tyrosine 251 are disordered. 2 stretches are compositionally biased toward basic and acidic residues: residues alanine 129–glutamate 139 and glutamine 158–isoleucine 175. A Phosphoserine modification is found at serine 197. Residues valine 205 to glutamate 222 are compositionally biased toward basic and acidic residues. A compositionally biased stretch (acidic residues) spans glutamate 223 to glycine 238. Serine 258 and serine 288 each carry phosphoserine. The interval leucine 263–serine 429 is disordered. Glycine 308 is modified (glycine amide). A compositionally biased stretch (basic and acidic residues) spans lysine 310 to glutamate 350. Residues serine 311, serine 324, and serine 362 each carry the phosphoserine modification. Methionine sulfoxide is present on methionine 363. Phosphoserine is present on residues serine 389, serine 393, serine 415, and serine 429. A compositionally biased stretch (basic and acidic residues) spans tyrosine 405–aspartate 422. Serine 415 is a glycosylation site (O-linked (Xyl...) (chondroitin sulfate) serine).

The protein belongs to the chromogranin/secretogranin protein family. In terms of assembly, self-interacts; self-assembly is promoted in vitro by chondroitin sulfate attachment which occurs at mildly acidic pH conditions. Interacts with SCG3. Interacts with ITPR1 in the secretory granules. In terms of processing, O-glycosylated; contains chondroitin sulfate (CS). CS attachment is pH-dependent, being observed at mildly acidic conditions of pH 5 but not at neutral pH, and promotes self-assembly in vitro. Highly expressed in adrenal medulla and pituitary gland. Weaker expression detected in cerebrum, cerebellum, spinal cord, liver, thyroid gland, striated muscle, lung, spleen, kidney, parotid gland, and sublingual gland.

The protein resides in the secreted. The protein localises to the cytoplasmic vesicle. It is found in the secretory vesicle. Its subcellular location is the neuronal dense core vesicle. Its function is as follows. Strongly inhibits glucose induced insulin release from the pancreas. In terms of biological role, inhibits catecholamine release from chromaffin cells and noradrenergic neurons by acting as a non-competitive nicotinic cholinergic antagonist. Can induce mast cell migration, degranulation and production of cytokines and chemokines. Regulates granule biogenesis in endocrine cells by up-regulating the transcription of protease nexin 1 (SERPINE2) via a cAMP-PKA-SP1 pathway. This leads to inhibition of granule protein degradation in the Golgi complex which in turn promotes granule formation. The polypeptide is Chromogranin-A (CHGA) (Equus caballus (Horse)).